The primary structure comprises 197 residues: Large ribosomal subunit protein uL18 (197 aa).

It belongs to the universal ribosomal protein uL18 family. In terms of assembly, part of the 50S ribosomal subunit. Contacts the 5S and 23S rRNAs.

This is one of the proteins that bind and probably mediate the attachment of the 5S RNA into the large ribosomal subunit, where it forms part of the central protuberance. The sequence is that of Large ribosomal subunit protein uL18 from Sulfolobus acidocaldarius (strain ATCC 33909 / DSM 639 / JCM 8929 / NBRC 15157 / NCIMB 11770).